The following is a 169-amino-acid chain: Der GTPase-activating protein YihI (169 aa).

Disordered stretches follow at residues 1 to 98 (MKPS…PQAE) and 144 to 169 (GLSY…LRGN). Residues 10-19 (SKGHAKARRK) are compositionally biased toward basic residues. Over residues 20–30 (TREELDQEARD) the composition is skewed to basic and acidic residues. Residues 31–40 (RKRLKKRRGH) are compositionally biased toward basic residues. The span at 49-58 (GNTTSGSKGQ) shows a compositional bias: polar residues. Residues 147 to 159 (YDDDEEEEEDEKQ) show a composition bias toward acidic residues. Positions 160–169 (EDMMRLLRGN) are enriched in basic and acidic residues.

Belongs to the YihI family. Interacts with Der.

Functionally, a GTPase-activating protein (GAP) that modifies Der/EngA GTPase function. May play a role in ribosome biogenesis. The polypeptide is Der GTPase-activating protein YihI (Escherichia coli O6:K15:H31 (strain 536 / UPEC)).